Consider the following 548-residue polypeptide: Luciferin 4-monooxygenase (548 aa).

The Microbody targeting signal signature appears at 546-548 (AKM).

The protein belongs to the ATP-dependent AMP-binding enzyme family. Homodimer. Mg(2+) serves as cofactor.

The protein localises to the peroxisome. It carries out the reaction firefly D-luciferin + ATP + O2 = firefly oxyluciferin + hnu + AMP + CO2 + diphosphate. With respect to regulation, inhibited by ATP analogs and sodium deoxycholate. Activated by choline-containing phospholipids. Its function is as follows. Produces green light with a wavelength of 570 nm. The chain is Luciferin 4-monooxygenase from Luciola mingrelica (Southern Russian firefly).